Here is a 435-residue protein sequence, read N- to C-terminus: Ras association domain-containing protein 9 (435 aa).

The disordered stretch occupies residues 1 to 22; it reads MAPFGRNLLKTRHKNRSPTKDM. The Ras-associating domain maps to 25 to 119; the sequence is EEKEIVVWVC…MQFVLVKTDA (95 aa). Positions 195-291 form a coiled coil; sequence HTIHQQVQRM…KLSAEIEREV (97 aa). A disordered region spans residues 371-423; sequence SKDGCQGKENRGKEAEASSSNGEIPPLTQRVFNTYTNDTDSDTGISSNHSQDS. The segment covering 375–386 has biased composition (basic and acidic residues); it reads CQGKENRGKEAE. Over residues 400-423 the composition is skewed to polar residues; it reads RVFNTYTNDTDSDTGISSNHSQDS.

In terms of assembly, interacts with PAM. In terms of tissue distribution, testis, kidney, skeletal muscle, liver, lung, brain, heart, pituitary gland, adrenal gland and ovary.

Its subcellular location is the endosome. In terms of biological role, may play a role in regulating vesicuar trafficking in cells. In Rattus norvegicus (Rat), this protein is Ras association domain-containing protein 9 (Rassf9).